Consider the following 113-residue polypeptide: uncharacterized protein (113 aa).

Belongs to the ycf68 family.

Its subcellular location is the plastid. The protein localises to the chloroplast. This is an uncharacterized protein from Eucalyptus globulus subsp. globulus (Tasmanian blue gum).